The primary structure comprises 386 residues: S-adenosylmethionine synthase (386 aa).

Residue His16 coordinates ATP. Residue Asp18 participates in Mg(2+) binding. Glu44 provides a ligand contact to K(+). Residues Glu57 and Gln100 each coordinate L-methionine. Residues 100 to 110 (QSRDIAQGVDR) are flexible loop. Residues 165–167 (DAK), Asp240, 246–247 (RK), Ala263, and Lys267 each bind ATP. Position 240 (Asp240) interacts with L-methionine. An L-methionine-binding site is contributed by Lys271.

The protein belongs to the AdoMet synthase family. In terms of assembly, homotetramer; dimer of dimers. It depends on Mg(2+) as a cofactor. The cofactor is K(+).

It is found in the cytoplasm. The enzyme catalyses L-methionine + ATP + H2O = S-adenosyl-L-methionine + phosphate + diphosphate. It participates in amino-acid biosynthesis; S-adenosyl-L-methionine biosynthesis; S-adenosyl-L-methionine from L-methionine: step 1/1. Catalyzes the formation of S-adenosylmethionine (AdoMet) from methionine and ATP. The overall synthetic reaction is composed of two sequential steps, AdoMet formation and the subsequent tripolyphosphate hydrolysis which occurs prior to release of AdoMet from the enzyme. The sequence is that of S-adenosylmethionine synthase from Francisella tularensis subsp. holarctica (strain FTNF002-00 / FTA).